The chain runs to 419 residues: RNA polymerase sigma factor sigD, chloroplastic (419 aa).

The N-terminal 52 residues, 1–52, are a transit peptide targeting the chloroplast; that stretch reads MATTIPTTATATMCPSPPVPTISPLLRTTHQCQPSPSLSSPFSIKLSTALVC. The Polymerase core binding signature appears at 207–220; sequence DLIQEGSIGLLRGA. A DNA-binding region (H-T-H motif) is located at residues 377–396; the sequence is FEEIGKSLKLSRERVRQING.

Belongs to the sigma-70 factor family. In terms of tissue distribution, mostly expressed in leaves, and to a lesser extent in roots. Present in seedlings.

Its subcellular location is the plastid. The protein localises to the chloroplast. Its function is as follows. Sigma factors are initiation factors that promote the attachment of plastid-encoded RNA polymerase (PEP) to specific initiation sites and are then released. Regulates transcription of the ndhF gene which codes for a subunit of the plastid NDH [NAD(P)H dehydrogenase] complex. The polypeptide is RNA polymerase sigma factor sigD, chloroplastic (SIGD) (Arabidopsis thaliana (Mouse-ear cress)).